The chain runs to 520 residues: GMP synthase [glutamine-hydrolyzing] (520 aa).

Residues 12–205 form the Glutamine amidotransferase type-1 domain; it reads KIIVLDYGSQ…AISICGGRGD (194 aa). The Nucleophile role is filled by cysteine 89. Active-site residues include histidine 179 and glutamate 181. The 190-residue stretch at 206–395 folds into the GMPS ATP-PPase domain; sequence WSMDNFIDMQ…LGMPDEVVWR (190 aa). 233-239 is an ATP binding site; the sequence is SGGVDSS.

As to quaternary structure, homodimer.

The enzyme catalyses XMP + L-glutamine + ATP + H2O = GMP + L-glutamate + AMP + diphosphate + 2 H(+). Its pathway is purine metabolism; GMP biosynthesis; GMP from XMP (L-Gln route): step 1/1. Functionally, catalyzes the synthesis of GMP from XMP. In Streptococcus equi subsp. equi (strain 4047), this protein is GMP synthase [glutamine-hydrolyzing].